We begin with the raw amino-acid sequence, 359 residues long: 4-hydroxy-tetrahydrodipicolinate synthase, chloroplastic (359 aa).

Residues 1–33 (MSSSIIGRCHFVADSIEAAGTKRRTTRWRSPRA) constitute a chloroplast transit peptide. Thr102 is a pyruvate binding site. Tyr188 acts as the Proton donor/acceptor in catalysis. Lys216 serves as the catalytic Schiff-base intermediate with substrate. Ile255 contacts pyruvate.

This sequence belongs to the DapA family.

Its subcellular location is the plastid. The protein localises to the chloroplast. The enzyme catalyses L-aspartate 4-semialdehyde + pyruvate = (2S,4S)-4-hydroxy-2,3,4,5-tetrahydrodipicolinate + H2O + H(+). Its pathway is amino-acid biosynthesis; L-lysine biosynthesis via DAP pathway; (S)-tetrahydrodipicolinate from L-aspartate: step 3/4. Catalyzes the condensation of (S)-aspartate-beta-semialdehyde [(S)-ASA] and pyruvate to 4-hydroxy-tetrahydrodipicolinate (HTPA). The polypeptide is 4-hydroxy-tetrahydrodipicolinate synthase, chloroplastic (DHPS1) (Nicotiana tabacum (Common tobacco)).